The sequence spans 238 residues: Ribonuclease PH (238 aa).

Phosphate contacts are provided by residues Arg86 and 124 to 126 (GTR).

This sequence belongs to the RNase PH family. In terms of assembly, homohexameric ring arranged as a trimer of dimers.

It catalyses the reaction tRNA(n+1) + phosphate = tRNA(n) + a ribonucleoside 5'-diphosphate. Its function is as follows. Phosphorolytic 3'-5' exoribonuclease that plays an important role in tRNA 3'-end maturation. Removes nucleotide residues following the 3'-CCA terminus of tRNAs; can also add nucleotides to the ends of RNA molecules by using nucleoside diphosphates as substrates, but this may not be physiologically important. Probably plays a role in initiation of 16S rRNA degradation (leading to ribosome degradation) during starvation. The polypeptide is Ribonuclease PH (Escherichia coli O6:K15:H31 (strain 536 / UPEC)).